Reading from the N-terminus, the 180-residue chain is Der GTPase-activating protein YihI (180 aa).

2 disordered regions span residues 1 to 90 (MSRK…QERR) and 145 to 180 (EPEEDEDFTAPAVKGSRNDDDLLADFDDINFDDYKG). A compositionally biased stretch (basic and acidic residues) spans 23–32 (NRTESDVEGR). The segment covering 33-43 (LRKRAKKRKGL) has biased composition (basic residues). Basic and acidic residues-rich tracts occupy residues 50–68 (SDAEEQKRQAAAQKRDPRL) and 80–90 (PVKKQTKQERR). Residues 165–180 (DLLADFDDINFDDYKG) show a composition bias toward acidic residues.

It belongs to the YihI family. In terms of assembly, interacts with Der.

In terms of biological role, a GTPase-activating protein (GAP) that modifies Der/EngA GTPase function. May play a role in ribosome biogenesis. The polypeptide is Der GTPase-activating protein YihI (Vibrio campbellii (strain ATCC BAA-1116)).